We begin with the raw amino-acid sequence, 1292 residues long: Myosin-1 (1292 aa).

The Myosin motor domain occupies 35-714; sequence VGVSDLTLLS…TLFALENMRD (680 aa). 128–135 contacts ATP; that stretch reads GESGAGKT. A Phosphoserine modification is found at serine 356. Residues 403–485 form an actin-binding region; that stretch reads SIGILDIYGF…PGIFAALNDS (83 aa). IQ domains follow at residues 718–738 and 739–764; these read HNMASRIQRAWRRFLQRRIDS and AIRIQRAIREMKHGNQFEQLRDYGNK. The TH1 domain maps to 770-960; the sequence is KERRAMSLLG…TIMVRRGRPG (191 aa). Disordered stretches follow at residues 956-991, 1017-1180, and 1227-1258; these read RGRPGNCSQRKKPLSTRLPDTYTTRETGYKNAGHPT, YSLN…FPLK, and PVASSAPLGNSGVATREAGTTSAATAAASAAT. A compositionally biased stretch (polar residues) spans 1062–1081; sequence MDNSSAAYGNASALPNSAPS. 2 stretches are compositionally biased toward pro residues: residues 1087-1121 and 1142-1155; these read ASRPVPKPAPRPGPKPGPKPGPKPGPKPAPKPMPR and APPPPPPPPPPPAA. The SH3 domain occupies 1157 to 1219; that stretch reads PSEPVYEAAF…PTAYIVESKA (63 aa). Residues 1240-1258 show a composition bias toward low complexity; sequence ATREAGTTSAATAAASAAT.

The protein belongs to the TRAFAC class myosin-kinesin ATPase superfamily. Myosin family. Phosphorylation of the TEDS site (Ser-356) is required for the polarization of the actin cytoskeleton. Phosphorylation probably activates the myosin-I ATPase activity.

The protein resides in the cytoplasm. It localises to the cytoskeleton. It is found in the actin patch. In terms of biological role, type-I myosin implicated in the organization of the actin cytoskeleton. Required for proper actin cytoskeleton polarization. At the cell cortex, assembles in patch-like structures together with proteins from the actin-polymerizing machinery and promotes actin assembly. Functions as actin nucleation-promoting factor (NPF) for the Arp2/3 complex. In Eremothecium gossypii (strain ATCC 10895 / CBS 109.51 / FGSC 9923 / NRRL Y-1056) (Yeast), this protein is Myosin-1 (MYO1).